An 841-amino-acid polypeptide reads, in one-letter code: Transcription regulator protein BACH2 (841 aa).

Positions 37 to 103 (CDVTLIVERK…AYTAKLLLSR (67 aa)) constitute a BTB domain. 3 disordered regions span residues 153 to 173 (HEDC…TMDS), 204 to 226 (EALL…DALT), and 246 to 329 (SSHS…AACL). Over residues 160 to 172 (AGEEEDEEEETMD) the composition is skewed to acidic residues. Basic and acidic residues-rich tracts occupy residues 214–224 (TDTKESSEKDA) and 298–313 (PDAK…DRKQ). Residue S315 is modified to Phosphoserine. Glycyl lysine isopeptide (Lys-Gly) (interchain with G-Cter in SUMO2) cross-links involve residues K382 and K421. A Phosphoserine; by RPS6KB1 modification is found at S521. Residues 583 to 610 (QSYGTNSSDESGSFSEADSESCPVQDRG) form a disordered region. The segment covering 584-598 (SYGTNSSDESGSFSE) has biased composition (polar residues). Residues 646–709 (FIHDVRRRSK…GELLDNFSCL (64 aa)) form the bZIP domain. The tract at residues 651-667 (RRRSKNRIAAQRCRKRK) is basic motif. Residues 671–678 (IQNLECEI) are leucine-zipper. The tract at residues 777-816 (PGPPWAPSNTSENCTSGRRLEGTDPGTFSERGPPLEPRSQ) is disordered. A Nuclear export signal motif is present at residues 821–841 (DFCQEMTDKCTTDEQPRKDYT).

It belongs to the bZIP family. CNC subfamily. In terms of assembly, homodimer; disulfide-linked. Heterodimer of BACH2 and Maf-related transcription factors. Post-translationally, phosphorylation at Ser-521 downstream of the PI-3K pathway promotes nuclear export. The reversible disulfide bond may provide a mechanism to regulate the activity in oxidative stress responses. In terms of tissue distribution, B-cell specific.

The protein localises to the cytoplasm. The protein resides in the nucleus. Transcriptional regulator that acts as a repressor or activator. Binds to Maf recognition elements (MARE). Plays an important role in coordinating transcription activation and repression by MAFK. Induces apoptosis in response to oxidative stress through repression of the antiapoptotic factor HMOX1. Positively regulates the nuclear import of actin. Is a key regulator of adaptive immunity, crucial for the maintenance of regulatory T-cell function and B-cell maturation. The polypeptide is Transcription regulator protein BACH2 (BACH2) (Homo sapiens (Human)).